The sequence spans 1179 residues: Integrin alpha-1 (1179 aa).

The N-terminal stretch at 1 to 28 (MVPRRPASLEVTVACIWLLTVILGVCIS) is a signal peptide. Over 29–1141 (FNVDVKNSMS…SKDGLPGRVP (1113 aa)) the chain is Extracellular. The FG-GAP 1 repeat unit spans residues 30-91 (NVDVKNSMSF…CPVGRERSMP (62 aa)). Cysteine 82 and cysteine 92 are joined by a disulfide. Asparagine 100, asparagine 105, asparagine 112, asparagine 217, asparagine 317, asparagine 341, asparagine 402, asparagine 418, and asparagine 459 each carry an N-linked (GlcNAc...) asparagine glycan. Residues 101 to 160 (TSIPNVTEIKENMTFGSTLVTNPKGGFLACGPLYAYRCGHLHYTTGICSDVSPTFQVVNS) form an FG-GAP 2 repeat. In terms of domain architecture, VWFA spans 175–364 (IVLDGSNSIY…LGERIFALEA (190 aa)). An FG-GAP 3 repeat occupies 365–417 (TADQSAASFEMEMSQTGFSAHYSQDWVMLGAVGAYDWNGTVVMQKANQIVIPH). 4 FG-GAP repeats span residues 422–474 (QTEP…DGDV), 475–537 (NILQ…RFEY), 556–614 (SCTK…TIRK), and 618–678 (QRIP…FEPN). Ca(2+)-binding residues include aspartate 497, aspartate 499, aspartate 501, and aspartate 505. Asparagine 531 carries N-linked (GlcNAc...) asparagine glycosylation. Ca(2+) is bound by residues aspartate 579, asparagine 581, aspartate 583, aspartate 587, aspartate 641, asparagine 643, aspartate 645, and aspartate 649. Residues cysteine 687 and cysteine 696 are joined by a disulfide bond. Residues asparagine 698, asparagine 747, and asparagine 779 are each glycosylated (N-linked (GlcNAc...) asparagine). Cysteine 702 and cysteine 755 are joined by a disulfide. A disulfide bridge connects residues cysteine 807 and cysteine 813. Asparagine 839, asparagine 882, asparagine 907, asparagine 938, asparagine 965, asparagine 973, and asparagine 1007 each carry an N-linked (GlcNAc...) asparagine glycan. Cysteine 877 and cysteine 885 are disulfide-bonded. 2 disulfides stabilise this stretch: cysteine 1029–cysteine 1062 and cysteine 1065–cysteine 1072. Asparagine 1083, asparagine 1102, and asparagine 1113 each carry an N-linked (GlcNAc...) asparagine glycan. The chain crosses the membrane as a helical span at residues 1142-1164 (LWVILLSAFAGLLLLMLLILALW). Residues 1165-1179 (KIGFFKRPLKKKMEK) lie on the Cytoplasmic side of the membrane. A GFFKR motif motif is present at residues 1167–1171 (GFFKR).

Belongs to the integrin alpha chain family. Heterodimer of an alpha and a beta subunit. Alpha-1 associates with beta-1. Interacts with RAB21. Interacts (via cytoplasmic domain) with PTPN2; activates PTPN2 phosphatase activity towards EGFR and negatively regulates EGF signaling.

The protein resides in the membrane. In terms of biological role, integrin alpha-1/beta-1 is a receptor for laminin and collagen. It recognizes the proline-hydroxylated sequence G-F-P-G-E-R in collagen. Involved in anchorage-dependent, negative regulation of EGF-stimulated cell growth. This is Integrin alpha-1 (Itga1) from Mus musculus (Mouse).